The primary structure comprises 259 residues: UPF0246 protein Rfer_2372 (259 aa).

The protein belongs to the UPF0246 family.

This Albidiferax ferrireducens (strain ATCC BAA-621 / DSM 15236 / T118) (Rhodoferax ferrireducens) protein is UPF0246 protein Rfer_2372.